A 477-amino-acid chain; its full sequence is Protein AC142 (477 aa).

It is found in the host cytoplasm. Its subcellular location is the host nucleus. It localises to the virion. Required for occlusion-derived virus (ODV) envelopment and subsequent embedding of virions into polyhedra. This is Protein AC142 (ORF142) from Autographa californica nuclear polyhedrosis virus (AcMNPV).